The sequence spans 378 residues: MRPATLEFIKQQFTGYYQRVYPVTPDALLQREWGFIFFDAGREVRMRRHLAFGERQELTEYLKTMVPAHVFYSSAYYESPGAPTMAEKGWSGADLIFDLDADHIMHGSYQAMLARVKEEVQKLLAVLTDELGFSEKYCEVVFSGGRGYHIHVNDLAVRSWGSAERREVVNYVCGIGLDPGLLIRAGTDLSTGWPRRYLGALDGYLAWLKVKNQKDALLHLSSIKGVSRSSAAGLLKSLDQVRATIGGDHPEKVLGDRVLRAVTTNDNPDWKKRLQETGVQADEPVTTDIKRLIRMPTSLHGGSGLRVVPLTISEVQEFDPLIDAVVFGDRDVQVTAEKTLTVSLLGNTYEVSAGTQTVPEAVAVFLCCRGLAEIAEGR.

Catalysis depends on residues Asp98, Asp100, and Asp282.

It belongs to the eukaryotic-type primase small subunit family. Heterodimer of a small subunit (PriS) and a large subunit (PriL). Mg(2+) is required as a cofactor. It depends on Mn(2+) as a cofactor.

In terms of biological role, catalytic subunit of DNA primase, an RNA polymerase that catalyzes the synthesis of short RNA molecules used as primers for DNA polymerase during DNA replication. The small subunit contains the primase catalytic core and has DNA synthesis activity on its own. Binding to the large subunit stabilizes and modulates the activity, increasing the rate of DNA synthesis while decreasing the length of the DNA fragments, and conferring RNA synthesis capability. The DNA polymerase activity may enable DNA primase to also catalyze primer extension after primer synthesis. May also play a role in DNA repair. This Methanosphaerula palustris (strain ATCC BAA-1556 / DSM 19958 / E1-9c) protein is DNA primase small subunit PriS.